Reading from the N-terminus, the 1083-residue chain is Error-prone DNA polymerase (1083 aa).

The protein belongs to the DNA polymerase type-C family. DnaE2 subfamily.

It is found in the cytoplasm. The catalysed reaction is DNA(n) + a 2'-deoxyribonucleoside 5'-triphosphate = DNA(n+1) + diphosphate. Functionally, DNA polymerase involved in damage-induced mutagenesis and translesion synthesis (TLS). It is not the major replicative DNA polymerase. This chain is Error-prone DNA polymerase, found in Xanthomonas oryzae pv. oryzae (strain PXO99A).